The following is a 141-amino-acid chain: Ribosome-binding factor A (141 aa).

The disordered stretch occupies residues 120–141 (DEALRAQSAGARPAGDEDPYKP).

Belongs to the RbfA family. Monomer. Binds 30S ribosomal subunits, but not 50S ribosomal subunits or 70S ribosomes.

The protein resides in the cytoplasm. One of several proteins that assist in the late maturation steps of the functional core of the 30S ribosomal subunit. Associates with free 30S ribosomal subunits (but not with 30S subunits that are part of 70S ribosomes or polysomes). Required for efficient processing of 16S rRNA. May interact with the 5'-terminal helix region of 16S rRNA. The protein is Ribosome-binding factor A of Corynebacterium jeikeium (strain K411).